The following is a 1319-amino-acid chain: MLDVNFFDELRIGLASADDIRNWSFGEVKKPETINYRTLKPEKDGLFCEKIFGPTRDWECYCGKYKRVRFKGIICERCGVEVTRAKVRRERMGHIELAAPVTHIWYFKGVPSRLGYLLDLAPKDLEKIIYFAAYVITAVDDELRHNELSTLEAEMEVEKKAVADQRDADLEARAQKLEADLAELEAEGAKSDVRRKVRDGGEREMRQLRDRSQRELDRLDEIWTTFTKLAPKQLIVDEVLYRELVDRYGEYFTGAMGAEAVQKLIQNFDLDAEAENLRETIRSGKGQKKLRALKRLKVVAAFQNSTNSPGGMVLDAVPVIPPELRPMVQLDGGRFATSDLNDLYRRVINRNNRLKRLIDLGAPEIIVNNEKRMLQESVDALFDNGRRGRPVTGPGNRPLKSLSDLLKGKQGRFRQNLLGKRVDYSGRSVIVVGPQLKLHQCGLPKLMALELFKPFVMKRLVDLNHAQNIKSAKRMVERQRAQVWDVLEEVIAEHPVLLNRAPTLHRLGIQAFEPQLVEGKAIQLHPLVCEAFNADFDGDQMAVHLPLSAEAQAEARILMLSSNNILSPASGRPLAMPRLDMVTGLYFLTTEIPGDIGAHAPAGKDQPEVGVYSSPAEAIMAMDRGALSVRAPIRVRLTQQRPPAEVEAELFENGWQPGDAWVAETTLGRVLFNELLPHGYPFVNKQMHKKVQSAIINDLAERFPMIVVAQTVDKLKDAGFHWATRSGVTVSMADVLVPPQKAEILDRYEKEAERIEKQYQRGALNQQERRDALVKIWQEATDEVGKALEEHYPADNPITLLPKSGATGNMTQVRNLAGMKGLVTNPKGEYIPRPIKSSFREGLTVLEYFINTHGARKGLADTALRTADSGYLTRRLVDVSQDVIVREHDCGTERGINVVIAEKQTGPDGKATLIRDAHIETSAYARTLAADAVDADGNVLVERGHDLGDPAIEKLLAAGVTTVKVRSVLTCTTGTGVCAMCYGRSMATGKLVDIGEAAGIVAAQSIGEPGTQLTMRTFHQGGVGDDITGGLPRVTELFEARVPKGKAPIADVTGRVRLEEGERFYKITIVPDDGGEEVVYDKLSKRQRLRVFKHEDGSERPLADGDHVEVGQQLMEGAADPHEVLRVMGPRQVQVHLVNEVQEVYRSQGVSIHDKHIEVIVRQMLRRVTIIDSGATEFLPGSLTERAEFESENRRVVAEGGEPAAGRPVLMGITKASLATDSWLSAASFQETTRVLTDAAINCRSDKLNGLKENVIIGKLIPAGTGINRYRNISVQPTEEARAAAYTIPSYEDQYYSPDFGSNTGAAVPLDDYGYSDYR.

Zn(2+)-binding residues include C60, C62, C75, and C78. Mg(2+)-binding residues include D535, D537, and D539. Residues C890, C971, C978, and C981 each contribute to the Zn(2+) site.

The protein belongs to the RNA polymerase beta' chain family. The RNAP catalytic core consists of 2 alpha, 1 beta, 1 beta' and 1 omega subunit. When a sigma factor is associated with the core the holoenzyme is formed, which can initiate transcription. The cofactor is Mg(2+). It depends on Zn(2+) as a cofactor.

It catalyses the reaction RNA(n) + a ribonucleoside 5'-triphosphate = RNA(n+1) + diphosphate. In terms of biological role, DNA-dependent RNA polymerase catalyzes the transcription of DNA into RNA using the four ribonucleoside triphosphates as substrates. This Mycobacteroides abscessus (strain ATCC 19977 / DSM 44196 / CCUG 20993 / CIP 104536 / JCM 13569 / NCTC 13031 / TMC 1543 / L948) (Mycobacterium abscessus) protein is DNA-directed RNA polymerase subunit beta'.